The following is a 349-amino-acid chain: Fructose-1,6-bisphosphatase class 1 (349 aa).

The Mg(2+) site is built by Glu113, Asp135, Ile137, and Asp138. Residues 138–141 (DGSS), Asn230, Tyr258, and Lys288 each bind substrate. Glu294 provides a ligand contact to Mg(2+).

This sequence belongs to the FBPase class 1 family. Homotetramer. The cofactor is Mg(2+).

It localises to the cytoplasm. The enzyme catalyses beta-D-fructose 1,6-bisphosphate + H2O = beta-D-fructose 6-phosphate + phosphate. It functions in the pathway carbohydrate biosynthesis; Calvin cycle. This is Fructose-1,6-bisphosphatase class 1 from Trichormus variabilis (strain ATCC 29413 / PCC 7937) (Anabaena variabilis).